The primary structure comprises 223 residues: Ribose-5-phosphate isomerase A (223 aa).

Substrate is bound by residues 29 to 32 (TGST), 82 to 85 (DGAD), and 95 to 98 (KGGG). Glutamate 104 functions as the Proton acceptor in the catalytic mechanism. Lysine 122 contributes to the substrate binding site.

Belongs to the ribose 5-phosphate isomerase family. As to quaternary structure, homodimer.

It catalyses the reaction aldehydo-D-ribose 5-phosphate = D-ribulose 5-phosphate. The protein operates within carbohydrate degradation; pentose phosphate pathway; D-ribose 5-phosphate from D-ribulose 5-phosphate (non-oxidative stage): step 1/1. In terms of biological role, catalyzes the reversible conversion of ribose-5-phosphate to ribulose 5-phosphate. In Neisseria meningitidis serogroup C (strain 053442), this protein is Ribose-5-phosphate isomerase A.